The chain runs to 595 residues: Aspartate--tRNA(Asp/Asn) ligase (595 aa).

Position 174 (E174) interacts with L-aspartate. The tract at residues 198-201 (QLFK) is aspartate. R220 serves as a coordination point for L-aspartate. ATP is bound by residues 220–222 (RDE) and Q229. Position 452 (H452) interacts with L-aspartate. Residue E486 coordinates ATP. R493 provides a ligand contact to L-aspartate. 538 to 541 (GLDR) serves as a coordination point for ATP.

Belongs to the class-II aminoacyl-tRNA synthetase family. Type 1 subfamily. As to quaternary structure, homodimer.

The protein localises to the cytoplasm. It carries out the reaction tRNA(Asx) + L-aspartate + ATP = L-aspartyl-tRNA(Asx) + AMP + diphosphate. Functionally, aspartyl-tRNA synthetase with relaxed tRNA specificity since it is able to aspartylate not only its cognate tRNA(Asp) but also tRNA(Asn). Reaction proceeds in two steps: L-aspartate is first activated by ATP to form Asp-AMP and then transferred to the acceptor end of tRNA(Asp/Asn). The polypeptide is Aspartate--tRNA(Asp/Asn) ligase (Nitrosococcus oceani (strain ATCC 19707 / BCRC 17464 / JCM 30415 / NCIMB 11848 / C-107)).